The chain runs to 1254 residues: MFPYQPMYPMQPMPFRNPFAAPRRPWFPRTDPFLAMQVQELARSMANLTFKQRRDVPPEGPPAKKKKKDTSQQGGRNQNGKKKNKLVKKKKKTGPPPQKTNGGKKKVNKKPGKRQRMVMKLESDKTFPIMLDGRINGYACVVGGKLFRPLHVEGKIDNDVLSSLKTKKASKYDLEYADVPQSMRADTFKYTHEKPQGYYSWHHGAVQYENGRFTVPKGVGAKGDSGRPILDNQGRVVAIVLGGVNEGSRTALSVVTWNEKGVTVKYTPENSEQWSLVTTMCLLANVTFPCSQPPICYDRKPAETLSMLSHNIDNPGYDELLEAVLKCPGRGKRSTEELFKEYKLTRPYMARCIRCAVGSCHSPIAIEAVRSEGHDGYVRLQTSSQYGLDPSGNLKGRTMRYDMHGTIEEIPLHQVSLHTSRPCHIIDGHGYFLLARCPAGDSITMEFKKESVTHSCSVPYEVKFNPVGRELYTHPPEHGAEQPCHVYAHDAQNRGAYVEMHLPGSEVDSTLLSTSGSSVHVTPPAGQSVLVECECGGTKISETINSAKQYSQCSKTAQCRAYRTQNDKWVYNSDKLPKAAGETLKGKLHVPFVLTEAKCTVPLAPEPIITFGFRSVSLKLHPKNPTFLTTRQLDGEPAYTHELITNPVVRNFSVTEKGWEFVWGNHPPQRYWSQETAPGNPHGLPHEVITHYYHRYPMSTILGLSICAAIVTTSIAASVWLFCKSRISCLTPYRLTPNARMPLCLAVLCCARTARAETTWESLDHLWNHNQQMFWSQLLIPLAALIVATRLLKCVCCVVPFLVVAGAVGAGAYEHATTMPNQVGIPYNTIVNRAGYAPLPISIVPTKVKLIPTVNLEYITCHYKTGMDSPAIKCCGTQECSPTYRPDEQCKVFSGVYPFMWGGAYCFCDTENTQISKAYVTKSEDCVTDHAQAYKAHTASVQAFLNITVGGHSTTAVVYVNGETPVNFNGVKLTAGPLSTAWSPFDKKIVQYAGEIYNYDFPEYGAGHAGAFGDIQARTISSSDVYANTNLVLQRPKAGAIHVPYTQAPSGYEQWKKDKPPSLKFTAPFGCEIYTNPIRAENCAVGSIPLAFDIPDALFTRVSETPTLSTAECTLNECVYSSDFGGIATVKYSASKSGKCAVHVPSGTATLKEAAVELAEQGSATIHFSTASIHPEFRLQICTSYVTCKGDCHPPKDHIVTHPQYHAQSFTAAVSKTAWTWLTSLLGGSAIIIIIGLVLATIVAMYVLTNQKHN.

Residues 1–33 form a necessary for nucleocapsid assembly and virus assembly region; it reads MFPYQPMYPMQPMPFRNPFAAPRRPWFPRTDPF. The host transcription inhibition stretch occupies residues 33–68; it reads FLAMQVQELARSMANLTFKQRRDVPPEGPPAKKKKK. The Supraphysiological nuclear export signal signature appears at 41 to 48; sequence LARSMANL. A disordered region spans residues 48–119; it reads LTFKQRRDVP…KPGKRQRMVM (72 aa). Residues 64 to 68 carry the Nuclear localization signal motif; it reads KKKKK. Composition is skewed to basic residues over residues 79–93 and 102–117; these read NGKK…KKKT and GGKK…RQRM. The interval 91–126 is binding to the viral RNA; that stretch reads KKTGPPPQKTNGGKKKVNKKPGKRQRMVMKLESDKT. The residue at position 93 (Thr-93) is a Phosphothreonine. The ribosome-binding stretch occupies residues 111 to 125; that stretch reads PGKRQRMVMKLESDK. The residue at position 123 (Ser-123) is a Phosphoserine. The Peptidase S3 domain occupies 125-274; it reads KTFPIMLDGR…KYTPENSEQW (150 aa). Residue Thr-126 is modified to Phosphothreonine. The active-site Charge relay system is His-151. The tract at residues 167–172 is interaction with spike glycoprotein E2; it reads KKASKY. Active-site charge relay system residues include Asp-173 and Ser-225. Residues 259 to 263 form an interaction with spike glycoprotein E2 region; that stretch reads EKGVT. Residues 275-286 are functions as an uncleaved signal peptide for the precursor of protein E3/E2; sequence SLVTTMCLLANV. The Extracellular portion of the chain corresponds to 275–700; the sequence is SLVTTMCLLA…HYYHRYPMST (426 aa). 7 disulfide bridges follow: Cys-281-Cys-290, Cys-352-Cys-456, Cys-355-Cys-360, Cys-423-Cys-437, Cys-484-Cys-599, Cys-533-Cys-559, and Cys-535-Cys-553. Residue Asn-285 is glycosylated (N-linked (GlcNAc...) asparagine; by host). Asn-651 carries N-linked (GlcNAc...) asparagine; by host glycosylation. A helical transmembrane segment spans residues 701–721; that stretch reads ILGLSICAAIVTTSIAASVWL. Residues 722–756 are Cytoplasmic-facing; sequence FCKSRISCLTPYRLTPNARMPLCLAVLCCARTARA. The interval 724 to 728 is interaction with the capsid protein; sequence KSRIS. Residues Cys-729, Cys-749, and Cys-750 are each lipidated (S-palmitoyl cysteine; by host). A transient transmembrane before p62-6K protein processing region spans residues 729–749; it reads CLTPYRLTPNARMPLCLAVLC. The cysteines at positions 729 and 750 are disulfide-linked. Topologically, residues 757 to 771 are extracellular; that stretch reads ETTWESLDHLWNHNQ. 2 helical membrane-spanning segments follow: residues 772 to 790 and 791 to 811; these read QMFW…VATR and LLKC…VGAG. Residues 812-1224 are Extracellular-facing; the sequence is AYEHATTMPN…SKTAWTWLTS (413 aa). Disulfide bonds link Cys-861-Cys-926, Cys-874-Cys-906, Cys-875-Cys-908, and Cys-880-Cys-890. Residues 896-913 form an E1 fusion peptide loop region; that stretch reads VYPFMWGGAYCFCDTENT. Asn-946 and Asn-1082 each carry an N-linked (GlcNAc...) asparagine; by host glycan. Cystine bridges form between Cys-1071–Cys-1083, Cys-1113–Cys-1188, Cys-1118–Cys-1192, and Cys-1140–Cys-1182. A helical transmembrane segment spans residues 1225 to 1245; it reads LLGGSAIIIIIGLVLATIVAM. The Cytoplasmic segment spans residues 1246–1254; sequence YVLTNQKHN.

In terms of assembly, homodimer. Homomultimer. Interacts with host karyopherin KPNA4; this interaction allows the nuclear import of the viral capsid protein. Interacts with spike glycoprotein E2. Interacts with host IRAK1; the interaction leads to inhibition of IRAK1-dependent signaling. Part of a tetrameric complex composed of host CRM1, host importin alpha/beta dimer and the viral capsid; this complex blocks the receptor-mediated transport through the nuclear pore. Interacts with host phosphatase PPP1CA; this interaction dephosphorylates the capsid protein, which increases its ability to bind to the viral genome. The precursor of protein E3/E2 and E1 form a heterodimer shortly after synthesis. As to quaternary structure, interacts with spike glycoprotein E2. The precursor of protein E3/E2 and E1 form a heterodimer shortly after synthesis. Processing of the precursor of protein E3/E2 into E2 and E3 results in a heterodimer of the spike glycoproteins E2 and E1. Spike at virion surface are constituted of three E2-E1 heterodimers. After target cell attachment and endocytosis, E1 change conformation to form homotrimers. Interacts with 6K protein. Interacts with host LDLRAD3; this interaction mediates viral entry to the host cell. In terms of assembly, interacts with spike glycoprotein E1. Processing of the precursor of protein E3/E2 into E2 and E3 results in a heterodimer of the spike glycoproteins E2 and E1. Spike at virion surface are constituted of a trimer of E2-E1 heterodimers. Interacts with 6K protein. Interacts with host LDLRAD3; this interaction mediates viral entry to the host cell. Oligomer. Interacts with spike glycoprotein E1. Interacts with spike glycoprotein E2. Post-translationally, structural polyprotein: Specific enzymatic cleavages in vivo yield mature proteins. Capsid protein is auto-cleaved during polyprotein translation, unmasking a signal peptide at the N-terminus of the precursor of E3/E2. The remaining polyprotein is then targeted to the host endoplasmic reticulum, where host signal peptidase cleaves it into pE2, 6K and E1 proteins. pE2 is further processed to mature E3 and E2 by host furin in trans-Golgi vesicle. Phosphorylated on serine and threonine residues. In terms of processing, palmitoylated via thioester bonds. These palmitoylations may induce disruption of the C-terminus transmembrane. This would result in the reorientation of E2 C-terminus from lumenal to cytoplasmic side. Post-translationally, N-glycosylated. Palmitoylated via thioester bonds.

Its subcellular location is the virion. The protein localises to the host cytoplasm. It is found in the host cell membrane. It localises to the host nucleus. The protein resides in the virion membrane. Its subcellular location is the host Golgi apparatus. The protein localises to the host trans-Golgi network. It is found in the host endoplasmic reticulum. It carries out the reaction Autocatalytic release of the core protein from the N-terminus of the togavirus structural polyprotein by hydrolysis of a -Trp-|-Ser- bond.. Functionally, forms an icosahedral capsid with a T=4 symmetry composed of 240 copies of the capsid protein surrounded by a lipid membrane through which penetrate 80 spikes composed of trimers of E1-E2 heterodimers. The capsid protein binds to the viral RNA genome at a site adjacent to a ribosome binding site for viral genome translation following genome release. Possesses a protease activity that results in its autocatalytic cleavage from the nascent structural protein. Following its self-cleavage, the capsid protein transiently associates with ribosomes, and within several minutes the protein binds to viral RNA and rapidly assembles into icosahedric core particles. The resulting nucleocapsid eventually associates with the cytoplasmic domain of the spike glycoprotein E2 at the cell membrane, leading to budding and formation of mature virions. In case of infection, new virions attach to target cells and after clathrin-mediated endocytosis their membrane fuses with the host endosomal membrane. This leads to the release of the nucleocapsid into the cytoplasm, followed by an uncoating event necessary for the genomic RNA to become accessible. The uncoating might be triggered by the interaction of capsid proteins with ribosomes. Binding of ribosomes would release the genomic RNA since the same region is genomic RNA-binding and ribosome-binding. Specifically inhibits interleukin-1 receptor-associated kinase 1/IRAK1-dependent signaling during viral entry, representing a means by which the alphaviruses may evade innate immune detection and activation prior to viral gene expression. Inhibits host transcription. Forms a tetrameric complex with XPO1/CRM1 and the nuclear import receptor importin. This complex blocks the central channel of host nuclear pores thereby inhibiting the receptor-mediated nuclear transport and thus the host mRNA and rRNA transcription. The inhibition of transcription is linked to a cytopathic effect on the host cell. Its function is as follows. Provides the signal sequence for the translocation of the precursor of protein E3/E2 to the host endoplasmic reticulum. Furin-cleaved E3 remains associated with spike glycoprotein E1 and mediates pH protection of the latter during the transport via the secretory pathway. After virion release from the host cell, the assembly protein E3 is gradually released in the extracellular space. In terms of biological role, plays a role in viral attachment to target host cell, by binding to the cell receptor LDLRAD3. Synthesized as a p62 precursor which is processed by furin at the cell membrane just before virion budding, giving rise to E2-E1 heterodimer. The p62-E1 heterodimer is stable, whereas E2-E1 is unstable and dissociate at low pH. p62 is processed at the last step, presumably to avoid E1 fusion activation before its final export to cell surface. E2 C-terminus contains a transitory transmembrane that would be disrupted by palmitoylation, resulting in reorientation of the C-terminal tail from lumenal to cytoplasmic side. This step is critical since E2 C-terminus is involved in budding by interacting with capsid proteins. This release of E2 C-terminus in cytoplasm occurs lately in protein export, and precludes premature assembly of particles at the endoplasmic reticulum membrane. Acts as a viroporin that participates in virus glycoprotein processing and transport to the plasma membrane, cell permeabilization and budding of viral particles. Disrupts the calcium homeostasis of the cell, probably at the endoplasmic reticulum level. This leads to cytoplasmic calcium elevation. Because of its lipophilic properties, the 6K protein is postulated to influence the selection of lipids that interact with the transmembrane domains of the glycoproteins, which, in turn, affects the deformability of the bilayer required for the extreme curvature that occurs as budding proceeds. Present in low amount in virions, about 3% compared to viral glycoproteins. Functionally, class II viral fusion protein. Fusion activity is inactive as long as E1 is bound to E2 in mature virion. After virus attachment to cell receptor LDLRAD3 and endocytosis, acidification of the endosome induce dissociation of E1/E2 heterodimer and concomitant trimerization of the E1 subunits. This E1 trimer is fusion active, and promotes release of viral nucleocapsid in cytoplasm after endosome and viral membrane fusion. Efficient fusion requires the presence of cholesterol and sphingolipid in the target membrane. This Venezuelan equine encephalitis virus (strain Mena II) (VEEV) protein is Structural polyprotein.